We begin with the raw amino-acid sequence, 535 residues long: MKINKNNYFKIIIFIIYVIINLINASDNVKLSNCGQARAEPTFKQSENGGQCQLPPPSIGTAALSLSAFNGGARCGQCYELTGPLGKTVVMVTDGCNSGEACTQKDLFNFIISNKDFDKIGNSSSYVNIYSLGYQEVSCGFLGNIKIKFGGSLGHNGKVDYSYYFTVSFSNFNIGIKQVQILGTGMVSYMKLKRSLGGFTWNQESGGSKLQFPATLVLTGVDGQIISYKFRQPPANIAIDMKKQFIPQVGLLSSKFNQSEICGMGNVPEYIYEDSLTFGWIVSNSWRFNVFNLSSQDTDDNPTLGESVIKMDLAANGGLAFTREGGFQTKYLESLKVMIKVLPPTNSLQCFFGASGIYVIPGPLGGDWQEISIPISVLKPQKVEYSLSFYNNQGQSITMWIDNIKWIFSPEAPPTPLIITDPTVTPPPLPQSIVTAAAGVVGLNSIGITSNKGGVANLVDGSSNDDDGTGGTGGGASNKVGKRVDGEDGDNFMGGNNAFSYYNDDNSSNILLFSFNITLTFLLLSLIINILLLLF.

Residues 1-25 form the signal peptide; sequence MKINKNNYFKIIIFIIYVIINLINA. N-linked (GlcNAc...) asparagine glycosylation occurs at Asn-24. Residues 26-514 are Extracellular-facing; that stretch reads SDNVKLSNCG…DNSSNILLFS (489 aa). One can recognise an Expansin-like EG45 domain in the interval 31-144; the sequence is LSNCGQARAE…QEVSCGFLGN (114 aa). Intrachain disulfides connect Cys-34–Cys-75 and Cys-78–Cys-139. Residues Asn-122, Asn-257, and Asn-292 are each glycosylated (N-linked (GlcNAc...) asparagine). A disordered region spans residues 459-487; the sequence is VDGSSNDDDGTGGTGGGASNKVGKRVDGE. N-linked (GlcNAc...) asparagine glycosylation occurs at Asn-506. A helical transmembrane segment spans residues 515–535; sequence FNITLTFLLLSLIINILLLLF.

It belongs to the expansin family. Expansin A subfamily.

The protein localises to the membrane. May serve to lubricate the movement of the cellulose microfibrils during cell growth and wall extension and/or may serve to maintain the fluid state of the slug cell wall. The protein is Expansin-like protein 9 (expl9) of Dictyostelium discoideum (Social amoeba).